Here is a 79-residue protein sequence, read N- to C-terminus: Serine protease inhibitor Kazal-type 1 (79 aa).

The N-terminal stretch at 1-23 (MKVASIFLLTALVLMSLSGNSGA) is a signal peptide. The Kazal-like domain maps to 26–79 (LGREAKCTNEVNGCPRIYNPVCGTDGVTYSNECLLCMENKERQTPVLIQKSGPC). 3 cysteine pairs are disulfide-bonded: cysteine 32–cysteine 61, cysteine 39–cysteine 58, and cysteine 47–cysteine 79.

The protein localises to the secreted. In terms of biological role, serine protease inhibitor which exhibits anti-trypsin activity. In the pancreas, protects against trypsin-catalyzed premature activation of zymogens. In the male reproductive tract, binds to sperm heads where it modulates sperm capacitance by inhibiting calcium uptake and nitrogen oxide (NO) production. The chain is Serine protease inhibitor Kazal-type 1 (SPINK1) from Bos taurus (Bovine).